Consider the following 101-residue polypeptide: Trp operon repressor homolog (101 aa).

Residues 59–82 (QREIQQNLNTSAATITRGSNMIKT) mediate DNA binding.

The protein belongs to the TrpR family. In terms of assembly, homodimer.

The protein localises to the cytoplasm. In terms of biological role, this protein is an aporepressor. When complexed with L-tryptophan it binds the operator region of the trp operon and prevents the initiation of transcription. The protein is Trp operon repressor homolog of Haemophilus influenzae (strain 86-028NP).